The chain runs to 421 residues: Probable sugar-binding periplasmic protein (421 aa).

A signal peptide spans 1 to 27 (MHKLLKLAAMGTAACALLAGMAPVANA).

It belongs to the bacterial solute-binding protein 1 family.

It localises to the periplasm. Part of a binding-protein-dependent transport system for a sugar. In Brucella suis biovar 1 (strain 1330), this protein is Probable sugar-binding periplasmic protein.